A 309-amino-acid polypeptide reads, in one-letter code: Coproporphyrin III ferrochelatase (309 aa).

Residues Tyr12, Arg29, 45–46 (RY), Ser53, and Tyr124 contribute to the Fe-coproporphyrin III site. Residues His182 and Glu263 each contribute to the Fe(2+) site.

The protein belongs to the ferrochelatase family.

Its subcellular location is the cytoplasm. The catalysed reaction is Fe-coproporphyrin III + 2 H(+) = coproporphyrin III + Fe(2+). Its pathway is porphyrin-containing compound metabolism; protoheme biosynthesis. Functionally, involved in coproporphyrin-dependent heme b biosynthesis. Catalyzes the insertion of ferrous iron into coproporphyrin III to form Fe-coproporphyrin III. The protein is Coproporphyrin III ferrochelatase of Listeria monocytogenes serotype 4b (strain F2365).